Consider the following 98-residue polypeptide: NADH-ubiquinone oxidoreductase chain 4L (98 aa).

The next 3 membrane-spanning stretches (helical) occupy residues 1-21, 29-49, and 61-81; these read MALT…GLLM, SLLC…LTIL, and IILL…LVMV.

Belongs to the complex I subunit 4L family. As to quaternary structure, core subunit of respiratory chain NADH dehydrogenase (Complex I) which is composed of 45 different subunits.

It localises to the mitochondrion inner membrane. The enzyme catalyses a ubiquinone + NADH + 5 H(+)(in) = a ubiquinol + NAD(+) + 4 H(+)(out). Functionally, core subunit of the mitochondrial membrane respiratory chain NADH dehydrogenase (Complex I) which catalyzes electron transfer from NADH through the respiratory chain, using ubiquinone as an electron acceptor. Part of the enzyme membrane arm which is embedded in the lipid bilayer and involved in proton translocation. The protein is NADH-ubiquinone oxidoreductase chain 4L (MT-ND4L) of Pteropus dasymallus (Ryukyu flying fox).